The primary structure comprises 387 residues: Protein phosphatase 2C 50 (387 aa).

A PPM-type phosphatase domain is found at 60-377 (VWGCASTRGR…DNITVIVVDL (318 aa)). Mn(2+)-binding residues include Asp-118 and Gly-119. The short motif at 264 to 268 (VSGIL) is the Modulates binding affinity to PYR/PYL/RCAR abscisic acid intracellular receptors element. Mn(2+)-binding residues include Asp-306 and Asp-368.

The protein belongs to the PP2C family. Interacts with PYL3, PYL5, PYL9 and PYL10. Binding to PYL3, PYL5, PYL9 and PYL10 is dependent on the presence of abscisic acid (ABA). Interacts with SAPK10. Mg(2+) serves as cofactor. The cofactor is Mn(2+).

The catalysed reaction is O-phospho-L-seryl-[protein] + H2O = L-seryl-[protein] + phosphate. It catalyses the reaction O-phospho-L-threonyl-[protein] + H2O = L-threonyl-[protein] + phosphate. Functionally, protein phosphatase involved in abscisic acid (ABA) signaling. Together with PYL3 and SAPK10, may form an ABA signaling module involved in stress response. The polypeptide is Protein phosphatase 2C 50 (Oryza sativa subsp. japonica (Rice)).